The sequence spans 221 residues: Riboflavin kinase (221 aa).

The interval 1–89 (MENIYIALKT…ISSILRFSQE (89 aa)) is H-T-H motif-like. Residues 90-221 (LKLVGAVQDG…EVLASIDGKL (132 aa)) form a riboflavin kinase region. 99–104 (GLGEGK) contacts CDP. Positions 128 and 130 each coordinate Mg(2+). FMN is bound by residues Ser-185 and Glu-192. A CDP-binding site is contributed by 197 to 200 (KYLR).

It belongs to the archaeal riboflavin kinase family. Requires Mg(2+) as cofactor.

The enzyme catalyses riboflavin + CTP = CDP + FMN + H(+). It functions in the pathway cofactor biosynthesis; FMN biosynthesis; FMN from riboflavin (CTP route): step 1/1. Catalyzes the CTP-dependent phosphorylation of riboflavin (vitamin B2) to form flavin mononucleotide (FMN). In Picrophilus torridus (strain ATCC 700027 / DSM 9790 / JCM 10055 / NBRC 100828 / KAW 2/3), this protein is Riboflavin kinase (ribK).